The primary structure comprises 185 residues: Small ribosomal subunit protein uS5 (185 aa).

Residues 18–81 (FVDKLVHINR…ESAKRALIRV (64 aa)) enclose the S5 DRBM domain.

This sequence belongs to the universal ribosomal protein uS5 family. In terms of assembly, part of the 30S ribosomal subunit. Contacts proteins S4 and S8.

Its function is as follows. With S4 and S12 plays an important role in translational accuracy. In terms of biological role, located at the back of the 30S subunit body where it stabilizes the conformation of the head with respect to the body. The chain is Small ribosomal subunit protein uS5 from Azorhizobium caulinodans (strain ATCC 43989 / DSM 5975 / JCM 20966 / LMG 6465 / NBRC 14845 / NCIMB 13405 / ORS 571).